The chain runs to 376 residues: NADPH oxidase organizer 1 (376 aa).

The PX domain maps to 1 to 131; sequence MAGPRYPVSV…GFFAPQPLDL (131 aa). 2 SH3 domains span residues 163–225 and 237–296; these read LEAQ…EAAP and SSGP…PEGL. Residues 302–376 are disordered; that stretch reads GTGFRGGDDP…DSVPHPTTEQ (75 aa). The segment covering 326 to 335 has biased composition (pro residues); sequence APPPTVPTRP. Residues 328–337 form a proline-rich region; mediates mutually exclusive interactions with itself and NOXA1 region; it reads PPTVPTRPSP.

As to quaternary structure, interacts with NOX1, NOXA1, CYBA/p22phox and NCF2/p67phox. Interacts with SH3PXD2A and SH3PXD2B. Expressed in testis, small and large intestines, liver, kidney and pancreas. Isoform 3 is mainly expressed in colon. Isoform 1 is preferentially expressed in testis.

It is found in the cell membrane. Its function is as follows. Constitutively potentiates the superoxide-generating activity of NOX1 and NOX3 and is required for the biogenesis of otoconia/otolith, which are crystalline structures of the inner ear involved in the perception of gravity. Isoform 3 is more potent than isoform 1 in activating NOX3. Together with NOXA1, may also substitute to NCF1/p47phox and NCF2/p67phox in supporting the phagocyte NOX2/gp91phox superoxide-generating activity. This chain is NADPH oxidase organizer 1 (NOXO1), found in Homo sapiens (Human).